The chain runs to 201 residues: dTTP/UTP pyrophosphatase (201 aa).

Asp-81 (proton acceptor) is an active-site residue.

This sequence belongs to the Maf family. YhdE subfamily. The cofactor is a divalent metal cation.

Its subcellular location is the cytoplasm. The enzyme catalyses dTTP + H2O = dTMP + diphosphate + H(+). The catalysed reaction is UTP + H2O = UMP + diphosphate + H(+). Nucleoside triphosphate pyrophosphatase that hydrolyzes dTTP and UTP. May have a dual role in cell division arrest and in preventing the incorporation of modified nucleotides into cellular nucleic acids. The polypeptide is dTTP/UTP pyrophosphatase (Dechloromonas aromatica (strain RCB)).